The following is a 300-amino-acid chain: Mitochondrial carnitine/acylcarnitine carrier-like protein (300 aa).

Solcar repeat units lie at residues 2-93, 102-201, and 211-298; these read ADAW…MEGL, LTIS…FKRF, and LGQG…TRSS. Transmembrane regions (helical) follow at residues 8–28, 64–84, 108–128, 176–195, 211–231, and 273–292; these read LASGTVGGAAQLVVGHPFDTI, GLYKGMGAPLATVAAFNAVLF, FVAGAGAGFAVSFLACPTELI, GLFPTFAREVPGNATMFAAY, LGQGSLIMAGGVAGASFWGIV, and GFGPAMARSVPANAACFLAY.

The protein belongs to the mitochondrial carrier (TC 2.A.29) family. High expression in cotyledons, leaves, flowers and developing siliques. Lower expression in roots and maturing siliques. Not detected in meristematic tissues.

The protein localises to the mitochondrion inner membrane. In terms of biological role, involved in photorespiratory metabolism. Acts probably as a carrier for a glycine decarboxylase (GDC) cofactor or, alternatively, may act as a mitochondrial glycine shuttle. Involved in the transition from the embryonic stage to the juvenile autotrophic stage. The protein is Mitochondrial carnitine/acylcarnitine carrier-like protein (BOU) of Arabidopsis thaliana (Mouse-ear cress).